The following is a 508-amino-acid chain: Probable cytosol aminopeptidase (508 aa).

2 residues coordinate Mn(2+): lysine 274 and aspartate 279. The active site involves lysine 286. Residues aspartate 297, aspartate 356, and glutamate 358 each coordinate Mn(2+). The active site involves arginine 360.

Belongs to the peptidase M17 family. Requires Mn(2+) as cofactor.

The protein localises to the cytoplasm. The enzyme catalyses Release of an N-terminal amino acid, Xaa-|-Yaa-, in which Xaa is preferably Leu, but may be other amino acids including Pro although not Arg or Lys, and Yaa may be Pro. Amino acid amides and methyl esters are also readily hydrolyzed, but rates on arylamides are exceedingly low.. The catalysed reaction is Release of an N-terminal amino acid, preferentially leucine, but not glutamic or aspartic acids.. Functionally, presumably involved in the processing and regular turnover of intracellular proteins. Catalyzes the removal of unsubstituted N-terminal amino acids from various peptides. This chain is Probable cytosol aminopeptidase, found in Cutibacterium acnes (strain DSM 16379 / KPA171202) (Propionibacterium acnes).